The chain runs to 276 residues: tRNA (guanine-N(7)-)-methyltransferase (276 aa).

Positions 1–23 (MRPDPAPLDPTDASPAQARRHQP) are disordered. 4 residues coordinate S-adenosyl-L-methionine: glutamate 103, glutamate 128, aspartate 155, and aspartate 178. Aspartate 178 is a catalytic residue. Substrate-binding positions include lysine 182, aspartate 214, and 252 to 255 (TRYE).

The protein belongs to the class I-like SAM-binding methyltransferase superfamily. TrmB family.

The enzyme catalyses guanosine(46) in tRNA + S-adenosyl-L-methionine = N(7)-methylguanosine(46) in tRNA + S-adenosyl-L-homocysteine. It functions in the pathway tRNA modification; N(7)-methylguanine-tRNA biosynthesis. In terms of biological role, catalyzes the formation of N(7)-methylguanine at position 46 (m7G46) in tRNA. The chain is tRNA (guanine-N(7)-)-methyltransferase from Cutibacterium acnes (strain DSM 16379 / KPA171202) (Propionibacterium acnes).